Consider the following 354-residue polypeptide: UDP-N-acetylglucosamine--N-acetylmuramyl-(pentapeptide) pyrophosphoryl-undecaprenol N-acetylglucosamine transferase (354 aa).

UDP-N-acetyl-alpha-D-glucosamine is bound by residues 14–16 (TGG), N126, R162, S190, I243, 262–267 (ALTVSE), and Q287.

Belongs to the glycosyltransferase 28 family. MurG subfamily.

Its subcellular location is the cell inner membrane. The catalysed reaction is di-trans,octa-cis-undecaprenyl diphospho-N-acetyl-alpha-D-muramoyl-L-alanyl-D-glutamyl-meso-2,6-diaminopimeloyl-D-alanyl-D-alanine + UDP-N-acetyl-alpha-D-glucosamine = di-trans,octa-cis-undecaprenyl diphospho-[N-acetyl-alpha-D-glucosaminyl-(1-&gt;4)]-N-acetyl-alpha-D-muramoyl-L-alanyl-D-glutamyl-meso-2,6-diaminopimeloyl-D-alanyl-D-alanine + UDP + H(+). The protein operates within cell wall biogenesis; peptidoglycan biosynthesis. Cell wall formation. Catalyzes the transfer of a GlcNAc subunit on undecaprenyl-pyrophosphoryl-MurNAc-pentapeptide (lipid intermediate I) to form undecaprenyl-pyrophosphoryl-MurNAc-(pentapeptide)GlcNAc (lipid intermediate II). The polypeptide is UDP-N-acetylglucosamine--N-acetylmuramyl-(pentapeptide) pyrophosphoryl-undecaprenol N-acetylglucosamine transferase (Photobacterium profundum (strain SS9)).